The chain runs to 319 residues: Pantothenate kinase (319 aa).

An ATP-binding site is contributed by 101–108 (GSVAVGKS).

This sequence belongs to the prokaryotic pantothenate kinase family.

It localises to the cytoplasm. The catalysed reaction is (R)-pantothenate + ATP = (R)-4'-phosphopantothenate + ADP + H(+). The protein operates within cofactor biosynthesis; coenzyme A biosynthesis; CoA from (R)-pantothenate: step 1/5. The polypeptide is Pantothenate kinase (Clavibacter sepedonicus (Clavibacter michiganensis subsp. sepedonicus)).